Here is a 225-residue protein sequence, read N- to C-terminus: Claudin-8 (225 aa).

The Cytoplasmic segment spans residues 1–7 (MATYALQ). A helical membrane pass occupies residues 8–28 (MAALVLGGVGMVGTVAVTIMP). Over 29-81 (QWRVSAFIESNIVVFENRWEGLWMNCMRHANIRMQCKVYDSLLALSPDLQASR) the chain is Extracellular. A helical membrane pass occupies residues 82-102 (GLMCAASVLAFLAFMTAILGM). Residues 103 to 117 (KCTRCTGDDENVKSR) lie on the Cytoplasmic side of the membrane. The chain crosses the membrane as a helical span at residues 118–138 (ILLTAGIIFFITGLVVLIPVS). Over 139-166 (WVANSIIRDFYNPLVDVALKRELGEALY) the chain is Extracellular. The chain crosses the membrane as a helical span at residues 167 to 187 (IGWTTALVLIAGGALFCCVFC). Residues 188 to 225 (CTERSNSYRYSVPSHRTTQRSFHAEKRSPSIYSKSQYV) lie on the Cytoplasmic side of the membrane. A Glycyl lysine isopeptide (Lys-Gly) (interchain with G-Cter in ubiquitin) cross-link involves residue Lys-213. The interactions with TJP1, TJP2 and TJP3 stretch occupies residues 224-225 (YV).

It belongs to the claudin family. Can form heteropolymeric strands with other claudins. Interacts with CLDN4. Directly interacts with TJP1/ZO-1, TJP2/ZO-2 and TJP3/ZO-3. Interacts with KLHL3. Post-translationally, ubiquitinated by the BCR(KLHL3) E3 ubiquitin ligase complex in the kidney, leading to its degradation. Expressed primarily in lung and kidney. Present in both cortical and medullar collecting ducts (at protein level).

It localises to the cell junction. The protein resides in the tight junction. It is found in the cell membrane. It catalyses the reaction chloride(in) = chloride(out). The catalysed reaction is bromide(in) = bromide(out). It carries out the reaction iodide(out) = iodide(in). The enzyme catalyses fluoride(in) = fluoride(out). Functionally, can associate with other claudins to regulate tight junction structural and functional strand dynamics. May coassemble with CLDN4 into tight junction strands containing anion-selective channels that convey paracellular chloride permeability in renal collecting ducts. Cannot form tight junction strands on its own. The sequence is that of Claudin-8 from Mus musculus (Mouse).